A 219-amino-acid chain; its full sequence is 7-cyano-7-deazaguanine synthase (219 aa).

10–20 (FSGGQDSTTCL) serves as a coordination point for ATP. C186, C195, C198, and C201 together coordinate Zn(2+).

It belongs to the QueC family. Homodimer. Zn(2+) serves as cofactor.

The enzyme catalyses 7-carboxy-7-deazaguanine + NH4(+) + ATP = 7-cyano-7-deazaguanine + ADP + phosphate + H2O + H(+). The protein operates within purine metabolism; 7-cyano-7-deazaguanine biosynthesis. Functionally, catalyzes the ATP-dependent conversion of 7-carboxy-7-deazaguanine (CDG) to 7-cyano-7-deazaguanine (preQ(0)). The sequence is that of 7-cyano-7-deazaguanine synthase from Bacillus velezensis (strain DSM 23117 / BGSC 10A6 / LMG 26770 / FZB42) (Bacillus amyloliquefaciens subsp. plantarum).